Consider the following 366-residue polypeptide: Chorismate synthase (366 aa).

Residues Arg-48 and Arg-54 each coordinate NADP(+). FMN-binding positions include 125-127 (RSS), 238-239 (NA), Gly-278, 293-297 (KPTSS), and Arg-319.

Belongs to the chorismate synthase family. In terms of assembly, homotetramer. FMNH2 serves as cofactor.

The catalysed reaction is 5-O-(1-carboxyvinyl)-3-phosphoshikimate = chorismate + phosphate. Its pathway is metabolic intermediate biosynthesis; chorismate biosynthesis; chorismate from D-erythrose 4-phosphate and phosphoenolpyruvate: step 7/7. Its function is as follows. Catalyzes the anti-1,4-elimination of the C-3 phosphate and the C-6 proR hydrogen from 5-enolpyruvylshikimate-3-phosphate (EPSP) to yield chorismate, which is the branch point compound that serves as the starting substrate for the three terminal pathways of aromatic amino acid biosynthesis. This reaction introduces a second double bond into the aromatic ring system. The sequence is that of Chorismate synthase from Burkholderia ambifaria (strain ATCC BAA-244 / DSM 16087 / CCUG 44356 / LMG 19182 / AMMD) (Burkholderia cepacia (strain AMMD)).